The sequence spans 168 residues: Small ribosomal subunit protein uS5 (168 aa).

The 64-residue stretch at 13–76 (IQEKLVAVRR…ENARRNMISV (64 aa)) folds into the S5 DRBM domain.

The protein belongs to the universal ribosomal protein uS5 family. Part of the 30S ribosomal subunit. Contacts proteins S4 and S8.

In terms of biological role, with S4 and S12 plays an important role in translational accuracy. Located at the back of the 30S subunit body where it stabilizes the conformation of the head with respect to the body. In Coxiella burnetii (strain RSA 493 / Nine Mile phase I), this protein is Small ribosomal subunit protein uS5.